A 555-amino-acid polypeptide reads, in one-letter code: Dimethylaniline monooxygenase [N-oxide-forming] 4 (555 aa).

Residues 9-13, Glu-32, and 40-41 contribute to the FAD site; these read GAGVS and LW. NADP(+) is bound by residues 60–61 and 195–198; these read TN and SGGD. A helical transmembrane segment spans residues 515-532; it reads YLKVWGAPLLLASVLLIC.

It belongs to the FMO family. The cofactor is FAD. Kidney and liver.

It is found in the microsome membrane. The protein localises to the endoplasmic reticulum membrane. The catalysed reaction is N,N-dimethylaniline + NADPH + O2 + H(+) = N,N-dimethylaniline N-oxide + NADP(+) + H2O. Functionally, this protein is involved in the oxidative metabolism of a variety of xenobiotics such as drugs and pesticides. The protein is Dimethylaniline monooxygenase [N-oxide-forming] 4 (FMO4) of Oryctolagus cuniculus (Rabbit).